A 192-amino-acid polypeptide reads, in one-letter code: Phosphoheptose isomerase (192 aa).

In terms of domain architecture, SIS spans 34–192 (VVDAYRAGNK…VERELFLKGN (159 aa)). 49–51 (NGG) serves as a coordination point for substrate. Positions 58 and 62 each coordinate Zn(2+). Substrate is bound by residues glutamate 62, 91-92 (ND), 117-119 (STS), serine 122, and glutamine 169. 2 residues coordinate Zn(2+): glutamine 169 and histidine 177.

It belongs to the SIS family. GmhA subfamily. In terms of assembly, homotetramer. Zn(2+) serves as cofactor.

It localises to the cytoplasm. It catalyses the reaction 2 D-sedoheptulose 7-phosphate = D-glycero-alpha-D-manno-heptose 7-phosphate + D-glycero-beta-D-manno-heptose 7-phosphate. It functions in the pathway carbohydrate biosynthesis; D-glycero-D-manno-heptose 7-phosphate biosynthesis; D-glycero-alpha-D-manno-heptose 7-phosphate and D-glycero-beta-D-manno-heptose 7-phosphate from sedoheptulose 7-phosphate: step 1/1. Catalyzes the isomerization of sedoheptulose 7-phosphate in D-glycero-D-manno-heptose 7-phosphate. This is Phosphoheptose isomerase from Geobacter sp. (strain M21).